Reading from the N-terminus, the 52-residue chain is Sporulation inhibitor sda (52 aa).

In terms of assembly, forms a stable heterotetramer with KinA (comprising two molecules of each protein), by binding to the KinA dimerization/phosphotransfer domain.

Its function is as follows. Mediates a developmental checkpoint inhibiting initiation of sporulation (by preventing phosphorylation of spo0A) in response to defects in the replication initiation machinery. Inhibits autophosphorylation of the histidine protein kinase KinA, forming a molecular barricade that prevents productive interaction between the ATP-binding site in the catalytic domain and the phosphorylatable His in the phosphotransfer domain of KinA. Probably also inhibits the activity of KinB, but has relatively little effect on KinC. Has at least one target in vivo in addition to KinA as sda does not require KinA to inhibit sporulation. This is Sporulation inhibitor sda (sda) from Bacillus subtilis (strain 168).